A 115-amino-acid polypeptide reads, in one-letter code: U3-lycotoxin-Ls1r (115 aa).

The signal sequence occupies residues 1–20 (MKFVLLFGVLLVTLFSYSSA). Residues 21–44 (EMLDDFHQADEDELVSLIKKEEAR) constitute a propeptide that is removed on maturation. Disulfide bonds link C48/C63, C55/C72, C62/C87, and C74/C85.

It belongs to the neurotoxin 19 (CSTX) family. 01 subfamily. Expressed by the venom gland.

Its subcellular location is the secreted. In Lycosa singoriensis (Wolf spider), this protein is U3-lycotoxin-Ls1r.